Here is a 457-residue protein sequence, read N- to C-terminus: Adenylosuccinate synthetase isozyme 1 (457 aa).

A disordered region spans residues 1–25 (MSGTRASNDRPPSAGGVKRGRLQHE). GTP is bound by residues 42-48 (GDEGKGK) and 70-72 (GHT). Aspartate 43 (proton acceptor) is an active-site residue. Aspartate 43 and glycine 70 together coordinate Mg(2+). Aspartate 43 contributes to the substrate binding site. IMP contacts are provided by residues 43–46 (DEGK), 68–71 (NAGH), threonine 163, arginine 177, asparagine 256, threonine 271, and arginine 335. Histidine 71 serves as the catalytic Proton donor. Substrate is bound at residue 331 to 337 (VTTGRKR). Residues arginine 337, 363 to 365 (KLD), and 445 to 448 (GVGK) each bind GTP.

This sequence belongs to the adenylosuccinate synthetase family. Homodimer. Mg(2+) is required as a cofactor.

It localises to the cytoplasm. It carries out the reaction IMP + L-aspartate + GTP = N(6)-(1,2-dicarboxyethyl)-AMP + GDP + phosphate + 2 H(+). The protein operates within purine metabolism; AMP biosynthesis via de novo pathway; AMP from IMP: step 1/2. Its function is as follows. Component of the purine nucleotide cycle (PNC), which interconverts IMP and AMP to regulate the nucleotide levels in various tissues, and which contributes to glycolysis and ammoniagenesis. Catalyzes the first committed step in the biosynthesis of AMP from IMP. This is Adenylosuccinate synthetase isozyme 1 from Bos taurus (Bovine).